Reading from the N-terminus, the 106-residue chain is Large ribosomal subunit protein uL24 (106 aa).

Belongs to the universal ribosomal protein uL24 family. In terms of assembly, part of the 50S ribosomal subunit.

One of two assembly initiator proteins, it binds directly to the 5'-end of the 23S rRNA, where it nucleates assembly of the 50S subunit. In terms of biological role, one of the proteins that surrounds the polypeptide exit tunnel on the outside of the subunit. The protein is Large ribosomal subunit protein uL24 of Spiroplasma kunkelii.